Here is a 164-residue protein sequence, read N- to C-terminus: Respiratory growth induced protein 2 (164 aa).

The protein belongs to the RGI1 family.

The protein resides in the cytoplasm. Its function is as follows. Involved in the control of energetic metabolism and significantly contribute to cell fitness, especially under respiratory growth conditions. This is Respiratory growth induced protein 2 (RGI2) from Saccharomyces cerevisiae (strain RM11-1a) (Baker's yeast).